The chain runs to 464 residues: Argininosuccinate lyase (464 aa).

This sequence belongs to the lyase 1 family. Argininosuccinate lyase subfamily.

It localises to the cytoplasm. It carries out the reaction 2-(N(omega)-L-arginino)succinate = fumarate + L-arginine. Its pathway is amino-acid biosynthesis; L-arginine biosynthesis; L-arginine from L-ornithine and carbamoyl phosphate: step 3/3. In Janthinobacterium sp. (strain Marseille) (Minibacterium massiliensis), this protein is Argininosuccinate lyase.